Consider the following 304-residue polypeptide: Coenzyme PQQ synthesis protein B (304 aa).

The protein belongs to the PqqB family.

It functions in the pathway cofactor biosynthesis; pyrroloquinoline quinone biosynthesis. May be involved in the transport of PQQ or its precursor to the periplasm. This is Coenzyme PQQ synthesis protein B from Pseudomonas paraeruginosa (strain DSM 24068 / PA7) (Pseudomonas aeruginosa (strain PA7)).